Consider the following 445-residue polypeptide: tRNA-2-methylthio-N(6)-dimethylallyladenosine synthase (445 aa).

One can recognise an MTTase N-terminal domain in the interval 3-124 (KNLYIKTYGC…LPELISKIVR (122 aa)). [4Fe-4S] cluster contacts are provided by Cys12, Cys48, Cys87, Cys162, Cys166, and Cys169. The 233-residue stretch at 148-380 (YPQGASSFIS…QKELMDQQLA (233 aa)) folds into the Radical SAM core domain. The 63-residue stretch at 383-445 (ESCVGSTIKV…SLNSLTGEIL (63 aa)) folds into the TRAM domain.

This sequence belongs to the methylthiotransferase family. MiaB subfamily. In terms of assembly, monomer. Requires [4Fe-4S] cluster as cofactor.

The protein localises to the cytoplasm. It carries out the reaction N(6)-dimethylallyladenosine(37) in tRNA + (sulfur carrier)-SH + AH2 + 2 S-adenosyl-L-methionine = 2-methylsulfanyl-N(6)-dimethylallyladenosine(37) in tRNA + (sulfur carrier)-H + 5'-deoxyadenosine + L-methionine + A + S-adenosyl-L-homocysteine + 2 H(+). Its function is as follows. Catalyzes the methylthiolation of N6-(dimethylallyl)adenosine (i(6)A), leading to the formation of 2-methylthio-N6-(dimethylallyl)adenosine (ms(2)i(6)A) at position 37 in tRNAs that read codons beginning with uridine. In Rickettsia akari (strain Hartford), this protein is tRNA-2-methylthio-N(6)-dimethylallyladenosine synthase.